Consider the following 433-residue polypeptide: Alpha-(1,3)-fucosyltransferase 4 (433 aa).

The disordered stretch occupies residues Met-1–Val-20. The Cytoplasmic segment spans residues Met-1–Ser-54. A helical; Signal-anchor for type II membrane protein transmembrane segment spans residues Ser-55–Gly-74. At Gln-75–Arg-433 the chain is on the lumenal side. N-linked (GlcNAc...) asparagine glycosylation is found at Asn-117 and Asn-218.

This sequence belongs to the glycosyltransferase 10 family. In terms of tissue distribution, in adult, highest expression in spleen, testis, brain, lung, kidney and skeletal muscle and to a lesser extent in liver and heart.

The protein resides in the golgi apparatus. It localises to the golgi stack membrane. The enzyme catalyses a beta-D-galactosyl-(1-&gt;4)-N-acetyl-beta-D-glucosaminyl derivative + GDP-beta-L-fucose = a beta-D-galactosyl-(1-&gt;4)-[alpha-L-fucosyl-(1-&gt;3)]-N-acetyl-beta-D-glucosaminyl derivative + GDP + H(+). The catalysed reaction is an N-acetyl-alpha-neuraminyl-(2-&gt;3)-beta-D-galactosyl-(1-&gt;4)-N-acetyl-beta-D-glucosaminyl derivative + GDP-beta-L-fucose = an alpha-Neu5Ac-(2-&gt;3)-beta-D-Gal-(1-&gt;4)-[alpha-L-Fuc-(1-&gt;3)]-beta-D-GlcNAc derivative + GDP + H(+). It catalyses the reaction an alpha-Neu5Ac-(2-&gt;3)-beta-D-Gal-(1-&gt;4)-beta-D-GlcNAc-(1-&gt;3)-beta-D-Gal-(1-&gt;4)-beta-D-GlcNAc derivative + GDP-beta-L-fucose = an alpha-Neu5Ac-(2-&gt;3)-beta-D-Gal-(1-&gt;4)-beta-D-GlcNAc-(1-&gt;3)-beta-D-Gal-(1-&gt;4)-[alpha-L-Fuc-(1-&gt;3)]-beta-D-GlcNAc derivative + GDP + H(+). It carries out the reaction an alpha-Neu5Ac-(2-&gt;3)-beta-D-Gal-(1-&gt;4)-beta-D-GlcNAc6S derivative + GDP-beta-L-fucose = an alpha-Neu5Ac-(2-&gt;3)-beta-D-Gal-(1-&gt;4)-[alpha-L-Fuc-(1-&gt;3)]-beta-D-GlcNAc6S derivative + GDP + H(+). The protein operates within protein modification; protein glycosylation. Catalyzes alpha(1-&gt;3) linkage of fucosyl moiety transferred from GDP-beta-L-fucose to N-acetyl glucosamine (GlcNAc) within type 2 lactosamine (LacNAc, Gal-beta(1-&gt;4)GlcNAc) glycan attached to N- or O-linked glycoproteins. Robustly fucosylates nonsialylated distal LacNAc unit of the polylactosamine chain to form Lewis X antigen (CD15), a glycan determinant known to mediate important cellular functions in development and immunity. Fucosylates with lower efficiency sialylated LacNAc acceptors to form sialyl Lewis X and 6-sulfo sialyl Lewis X determinants that serve as recognition epitopes for C-type lectins. Together with FUT7 contributes to SELE, SELL and SELP selectin ligand biosynthesis and selectin-dependent lymphocyte homing, leukocyte migration and blood leukocyte homeostasis. In a cell type specific manner, may also fucosylate the internal LacNAc unit of the polylactosamine chain to form VIM-2 antigen that serves as recognition epitope for SELE. The polypeptide is Alpha-(1,3)-fucosyltransferase 4 (Fut4) (Rattus norvegicus (Rat)).